Consider the following 164-residue polypeptide: Translocator protein homolog (164 aa).

A run of 5 helical transmembrane segments spans residues 16–34 (WSASLVPVACGWFIGNSYK), 52–72 (SAFGPAWTLLYLTMGYASHLA), 89–106 (ILYIAQLAANFAWMPLFY), 112–132 (KLALADLGILTGLVGWLAKTW), and 141–163 (KWLIPYLAWLGYAGYLNLGYCLL).

Belongs to the TspO/BZRP family.

The protein localises to the mitochondrion membrane. May play a role in the transport of porphyrins and heme. This Schizosaccharomyces pombe (strain 972 / ATCC 24843) (Fission yeast) protein is Translocator protein homolog.